The following is a 491-amino-acid chain: Probable aspartyl aminopeptidase (491 aa).

Histidine 90 provides a ligand contact to Zn(2+). Residue histidine 168 participates in substrate binding. A Zn(2+)-binding site is contributed by aspartate 278. A substrate-binding site is contributed by glutamate 315. The Zn(2+) site is built by glutamate 316 and aspartate 361. Substrate contacts are provided by aspartate 361, histidine 364, lysine 389, and tyrosine 396. Histidine 455 lines the Zn(2+) pocket.

This sequence belongs to the peptidase M18 family. Tetrahedron-shaped homododecamer built from six homodimers. It depends on Zn(2+) as a cofactor.

The protein localises to the cytoplasm. The enzyme catalyses Release of an N-terminal aspartate or glutamate from a peptide, with a preference for aspartate.. In terms of biological role, likely to play an important role in intracellular protein and peptide metabolism. The sequence is that of Probable aspartyl aminopeptidase from Ricinus communis (Castor bean).